Consider the following 268-residue polypeptide: Malonyl-[acyl-carrier protein] O-methyltransferase 1 (268 aa).

It belongs to the methyltransferase superfamily.

The enzyme catalyses malonyl-[ACP] + S-adenosyl-L-methionine = malonyl-[ACP] methyl ester + S-adenosyl-L-homocysteine. Its pathway is cofactor biosynthesis; biotin biosynthesis. Converts the free carboxyl group of a malonyl-thioester to its methyl ester by transfer of a methyl group from S-adenosyl-L-methionine (SAM). It allows to synthesize pimeloyl-ACP via the fatty acid synthetic pathway. In Ilyobacter polytropus (strain ATCC 51220 / DSM 2926 / LMG 16218 / CuHBu1), this protein is Malonyl-[acyl-carrier protein] O-methyltransferase 1.